The primary structure comprises 130 residues: Putative transposase for insertion sequence element IS6501 (130 aa).

The protein belongs to the transposase 11 family.

Functionally, involved in the transposition of the insertion sequence. The chain is Putative transposase for insertion sequence element IS6501 from Brucella ovis (strain ATCC 25840 / 63/290 / NCTC 10512).